A 480-amino-acid polypeptide reads, in one-letter code: Argininosuccinate lyase (480 aa).

A compositionally biased stretch (polar residues) spans 1-17; the sequence is MTDTTPSADLGASSQQP. The segment at 1-24 is disordered; it reads MTDTTPSADLGASSQQPAKAWSGR.

Belongs to the lyase 1 family. Argininosuccinate lyase subfamily.

It is found in the cytoplasm. It catalyses the reaction 2-(N(omega)-L-arginino)succinate = fumarate + L-arginine. The protein operates within amino-acid biosynthesis; L-arginine biosynthesis; L-arginine from L-ornithine and carbamoyl phosphate: step 3/3. In Azoarcus sp. (strain BH72), this protein is Argininosuccinate lyase.